The chain runs to 260 residues: tRNA (guanine-N(1)-)-methyltransferase (260 aa).

Residues Gly-117 and Leu-137–Leu-142 contribute to the S-adenosyl-L-methionine site.

Belongs to the RNA methyltransferase TrmD family. Homodimer.

It localises to the cytoplasm. The enzyme catalyses guanosine(37) in tRNA + S-adenosyl-L-methionine = N(1)-methylguanosine(37) in tRNA + S-adenosyl-L-homocysteine + H(+). Specifically methylates guanosine-37 in various tRNAs. The sequence is that of tRNA (guanine-N(1)-)-methyltransferase from Cupriavidus metallidurans (strain ATCC 43123 / DSM 2839 / NBRC 102507 / CH34) (Ralstonia metallidurans).